The sequence spans 517 residues: ATP synthase subunit alpha (517 aa).

Residue 174–181 (GDRQTGKT) coordinates ATP.

It belongs to the ATPase alpha/beta chains family. F-type ATPases have 2 components, CF(1) - the catalytic core - and CF(0) - the membrane proton channel. CF(1) has five subunits: alpha(3), beta(3), gamma(1), delta(1), epsilon(1). CF(0) has four main subunits: a(1), b(1), b'(1) and c(9-12).

The protein localises to the cell inner membrane. The catalysed reaction is ATP + H2O + 4 H(+)(in) = ADP + phosphate + 5 H(+)(out). In terms of biological role, produces ATP from ADP in the presence of a proton gradient across the membrane. The alpha chain is a regulatory subunit. The protein is ATP synthase subunit alpha of Methylibium petroleiphilum (strain ATCC BAA-1232 / LMG 22953 / PM1).